The following is a 369-amino-acid chain: Omega-amidase, chloroplastic (369 aa).

A chloroplast-targeting transit peptide spans 1–63 (MKSAISSSLF…SALRSISSSM (63 aa)). Ala-64 bears the N-acetylalanine mark. The CN hydrolase domain maps to 88-337 (FNIGLCQLSV…EAIIIAEIDY (250 aa)). Glu-127 functions as the Proton acceptor in the catalytic mechanism. The Proton donor role is filled by Lys-201. Cys-242 acts as the Nucleophile in catalysis.

It belongs to the nitrilase superfamily. NIT1/NIT2 family.

The protein localises to the plastid. It is found in the chloroplast. The catalysed reaction is a monoamide of a dicarboxylate + H2O = a dicarboxylate + NH4(+). Functionally, omega-amidase involved in the metabolism of asparagine. Probably also closely coupled with glutamine transamination in the methionine salvage cycle. Can use alpha-ketosuccinamate and alpha-hydroxysuccinamate as substrates, producing respectively oxaloacetate and malate, or alpha-ketoglutaramate, producing alpha-ketoglutarate. This chain is Omega-amidase, chloroplastic, found in Arabidopsis thaliana (Mouse-ear cress).